Here is a 417-residue protein sequence, read N- to C-terminus: NADH-quinone oxidoreductase subunit D (417 aa).

Belongs to the complex I 49 kDa subunit family. NDH-1 is composed of 14 different subunits. Subunits NuoB, C, D, E, F, and G constitute the peripheral sector of the complex.

It is found in the cell inner membrane. The catalysed reaction is a quinone + NADH + 5 H(+)(in) = a quinol + NAD(+) + 4 H(+)(out). NDH-1 shuttles electrons from NADH, via FMN and iron-sulfur (Fe-S) centers, to quinones in the respiratory chain. The immediate electron acceptor for the enzyme in this species is believed to be ubiquinone. Couples the redox reaction to proton translocation (for every two electrons transferred, four hydrogen ions are translocated across the cytoplasmic membrane), and thus conserves the redox energy in a proton gradient. The sequence is that of NADH-quinone oxidoreductase subunit D from Cupriavidus metallidurans (strain ATCC 43123 / DSM 2839 / NBRC 102507 / CH34) (Ralstonia metallidurans).